Here is a 437-residue protein sequence, read N- to C-terminus: O-methyltransferase 3 (437 aa).

A disordered region spans residues 1-21; it reads MNNKTSNGDITNDEPTVGSKR. The stretch at 146–180 forms a coiled coil; sequence SDNLYQDKDDLEKQEKEREKKMANLLSKNVDIKEL. Residues 408-437 are disordered; sequence DPINNNNNNNNNNNNNNNNTTTTTSTTTTN. Residues 411–437 show a composition bias toward low complexity; the sequence is NNNNNNNNNNNNNNNNTTTTTSTTTTN.

This sequence belongs to the methyltransferase superfamily. METL family.

Probable methyltransferase. The chain is O-methyltransferase 3 (omt3) from Dictyostelium discoideum (Social amoeba).